The sequence spans 256 residues: Zinc import ATP-binding protein ZnuC 1 (256 aa).

Residues leucine 5–glutamine 220 enclose the ABC transporter domain. Residue glycine 37–serine 44 coordinates ATP. Residues histidine 232–glutamine 256 form a disordered region.

The protein belongs to the ABC transporter superfamily. Zinc importer (TC 3.A.1.15.5) family. In terms of assembly, the complex is composed of two ATP-binding proteins (ZnuC), two transmembrane proteins (ZnuB) and a solute-binding protein (ZnuA).

It localises to the cell inner membrane. It catalyses the reaction Zn(2+)(out) + ATP(in) + H2O(in) = Zn(2+)(in) + ADP(in) + phosphate(in) + H(+)(in). Part of the ABC transporter complex ZnuABC involved in zinc import. Responsible for energy coupling to the transport system. The chain is Zinc import ATP-binding protein ZnuC 1 from Aliivibrio fischeri (strain ATCC 700601 / ES114) (Vibrio fischeri).